The primary structure comprises 704 residues: Elongation factor G 2 (704 aa).

Positions 8–290 constitute a tr-type G domain; sequence ERYRNIGISA…AIIDYLPSPV (283 aa). Residues 17–24, 88–92, and 142–145 each bind GTP; these read AHIDAGKT, DTPGH, and NKMD.

Belongs to the TRAFAC class translation factor GTPase superfamily. Classic translation factor GTPase family. EF-G/EF-2 subfamily.

The protein resides in the cytoplasm. Functionally, catalyzes the GTP-dependent ribosomal translocation step during translation elongation. During this step, the ribosome changes from the pre-translocational (PRE) to the post-translocational (POST) state as the newly formed A-site-bound peptidyl-tRNA and P-site-bound deacylated tRNA move to the P and E sites, respectively. Catalyzes the coordinated movement of the two tRNA molecules, the mRNA and conformational changes in the ribosome. The protein is Elongation factor G 2 of Polaromonas sp. (strain JS666 / ATCC BAA-500).